A 302-amino-acid chain; its full sequence is Bacteriochlorophyll synthase 33 kDa chain (302 aa).

The next 9 helical transmembrane spans lie at 25–45, 49–69, 97–117, 119–139, 145–165, 166–186, 223–243, 246–266, and 275–295; these read ITWF…GIWP, WPLV…MSQA, WGLY…WMLG, WGFG…VEPI, GWWG…FTGA, AVLS…LYAF, LACT…VIWG, IHAG…RVLL, and WYNG…AFAI.

The protein localises to the cell membrane. Its pathway is porphyrin-containing compound metabolism; bacteriochlorophyll biosynthesis (light-independent). Functionally, catalyzes the esterification of bacteriochlorophyllide a by geranylgeraniol-PPi. This chain is Bacteriochlorophyll synthase 33 kDa chain (bchG), found in Cereibacter sphaeroides (strain ATCC 17023 / DSM 158 / JCM 6121 / CCUG 31486 / LMG 2827 / NBRC 12203 / NCIMB 8253 / ATH 2.4.1.) (Rhodobacter sphaeroides).